The following is a 181-amino-acid chain: Adenine phosphoribosyltransferase (181 aa).

Belongs to the purine/pyrimidine phosphoribosyltransferase family. Homodimer.

It is found in the cytoplasm. The enzyme catalyses AMP + diphosphate = 5-phospho-alpha-D-ribose 1-diphosphate + adenine. The protein operates within purine metabolism; AMP biosynthesis via salvage pathway; AMP from adenine: step 1/1. Its function is as follows. Catalyzes a salvage reaction resulting in the formation of AMP, that is energically less costly than de novo synthesis. The polypeptide is Adenine phosphoribosyltransferase (Brucella suis (strain ATCC 23445 / NCTC 10510)).